Reading from the N-terminus, the 86-residue chain is Translation initiation factor IF-1 (86 aa).

The region spanning 1–72 (MPKDDVIKME…TKGRIVYRKK (72 aa)) is the S1-like domain.

The protein belongs to the IF-1 family. As to quaternary structure, component of the 30S ribosomal translation pre-initiation complex which assembles on the 30S ribosome in the order IF-2 and IF-3, IF-1 and N-formylmethionyl-tRNA(fMet); mRNA recruitment can occur at any time during PIC assembly.

The protein localises to the cytoplasm. In terms of biological role, one of the essential components for the initiation of protein synthesis. Stabilizes the binding of IF-2 and IF-3 on the 30S subunit to which N-formylmethionyl-tRNA(fMet) subsequently binds. Helps modulate mRNA selection, yielding the 30S pre-initiation complex (PIC). Upon addition of the 50S ribosomal subunit IF-1, IF-2 and IF-3 are released leaving the mature 70S translation initiation complex. This chain is Translation initiation factor IF-1, found in Pseudothermotoga lettingae (strain ATCC BAA-301 / DSM 14385 / NBRC 107922 / TMO) (Thermotoga lettingae).